A 378-amino-acid polypeptide reads, in one-letter code: Alcohol dehydrogenase class-3 (378 aa).

Ala-1 carries the post-translational modification N-acetylalanine. Residue Cys-46 participates in Zn(2+) binding. Residue His-47 coordinates NAD(+). The an alcohol site is built by Thr-48 and His-68. Positions 68, 69, 98, 101, 104, 112, and 176 each coordinate Zn(2+). NAD(+)-binding positions include 201–206 (GLGTVG), Asp-225, Lys-230, 294–296 (VGV), 319–321 (TAF), and Arg-371.

The protein belongs to the zinc-containing alcohol dehydrogenase family. Class-III subfamily. As to quaternary structure, homodimer. Requires Zn(2+) as cofactor.

The protein localises to the cytoplasm. The enzyme catalyses a primary alcohol + NAD(+) = an aldehyde + NADH + H(+). It catalyses the reaction a secondary alcohol + NAD(+) = a ketone + NADH + H(+). The catalysed reaction is S-(hydroxymethyl)glutathione + NADP(+) = S-formylglutathione + NADPH + H(+). It carries out the reaction S-(hydroxymethyl)glutathione + NAD(+) = S-formylglutathione + NADH + H(+). Functionally, class-III ADH is remarkably ineffective in oxidizing ethanol, but it readily catalyzes the oxidation of long-chain primary alcohols and the oxidation of S-(hydroxymethyl) glutathione. The protein is Alcohol dehydrogenase class-3 of Pisum sativum (Garden pea).